Reading from the N-terminus, the 892-residue chain is Alanine--tRNA ligase (892 aa).

Residues histidine 578, histidine 582, cysteine 681, and histidine 685 each coordinate Zn(2+).

The protein belongs to the class-II aminoacyl-tRNA synthetase family. Requires Zn(2+) as cofactor.

The protein resides in the cytoplasm. The catalysed reaction is tRNA(Ala) + L-alanine + ATP = L-alanyl-tRNA(Ala) + AMP + diphosphate. Its function is as follows. Catalyzes the attachment of alanine to tRNA(Ala) in a two-step reaction: alanine is first activated by ATP to form Ala-AMP and then transferred to the acceptor end of tRNA(Ala). Also edits incorrectly charged Ser-tRNA(Ala) and Gly-tRNA(Ala) via its editing domain. This chain is Alanine--tRNA ligase, found in Cutibacterium acnes (strain DSM 16379 / KPA171202) (Propionibacterium acnes).